The following is a 930-amino-acid chain: Endoplasmic reticulum aminopeptidase 1 (930 aa).

Over 1 to 2 (MP) the chain is Cytoplasmic. The helical; Signal-anchor for type II membrane protein transmembrane segment at 3-23 (SLLPLVLTFLSVSSPSWCQNS) threads the bilayer. At 24 to 930 (DIESLKASNG…WLQKEKPELL (907 aa)) the chain is on the lumenal side. Asn-59 and Asn-143 each carry an N-linked (GlcNAc...) asparagine glycan. Residues Glu-172 and 306–310 (GAMEN) each bind substrate. His-342 provides a ligand contact to Zn(2+). The active site involves Glu-343. His-346 and Glu-365 together coordinate Zn(2+). A disulfide bond links Cys-393 and Cys-432. 2 N-linked (GlcNAc...) asparagine glycosylation sites follow: Asn-403 and Asn-655. A disulfide bond links Cys-725 and Cys-732. N-linked (GlcNAc...) asparagine glycans are attached at residues Asn-749 and Asn-890.

This sequence belongs to the peptidase M1 family. Monomer. May also exist as a heterodimer; with ERAP2. Interacts with RBMX. Requires Zn(2+) as cofactor. In terms of processing, N-glycosylated.

Its subcellular location is the endoplasmic reticulum membrane. Its function is as follows. Aminopeptidase that plays a central role in peptide trimming, a step required for the generation of most HLA class I-binding peptides. Peptide trimming is essential to customize longer precursor peptides to fit them to the correct length required for presentation on MHC class I molecules. Strongly prefers substrates 9-16 residues long. Rapidly degrades 13-mer to a 9-mer and then stops. Preferentially hydrolyzes the residue Leu and peptides with a hydrophobic C-terminus, while it has weak activity toward peptides with charged C-terminus. May play a role in the inactivation of peptide hormones. May be involved in the regulation of blood pressure through the inactivation of angiotensin II and/or the generation of bradykinin in the kidney. The chain is Endoplasmic reticulum aminopeptidase 1 (Erap1) from Mus musculus (Mouse).